Consider the following 223-residue polypeptide: uncharacterized protein (223 aa).

The next 7 helical transmembrane spans lie at 25 to 45 (TYFL…ATMA), 46 to 66 (IGIS…ILFF), 78 to 98 (LVWT…MLNF), 105 to 125 (GPIV…GLSA), 140 to 160 (FLFA…FVGS), 161 to 181 (TVAH…FILF), and 199 to 219 (ISMY…LGIM).

This sequence belongs to the BI1 family.

It localises to the cell membrane. This is an uncharacterized protein from Vibrio cholerae serotype O1 (strain ATCC 39315 / El Tor Inaba N16961).